The chain runs to 72 residues: Cytochrome c oxidase subunit 8C, mitochondrial (72 aa).

A mitochondrion-targeting transit peptide spans methionine 1 to serine 29. Residues histidine 30–threonine 40 lie on the Mitochondrial matrix side of the membrane. The chain crosses the membrane as a helical span at residues proline 41 to serine 64. The Mitochondrial intermembrane segment spans residues asparagine 65–glutamate 72.

Belongs to the cytochrome c oxidase VIII family. Component of the cytochrome c oxidase (complex IV, CIV), a multisubunit enzyme composed of 14 subunits. The complex is composed of a catalytic core of 3 subunits MT-CO1, MT-CO2 and MT-CO3, encoded in the mitochondrial DNA, and 11 supernumerary subunits COX4I, COX5A, COX5B, COX6A, COX6B, COX6C, COX7A, COX7B, COX7C, COX8 and NDUFA4, which are encoded in the nuclear genome. The complex exists as a monomer or a dimer and forms supercomplexes (SCs) in the inner mitochondrial membrane with NADH-ubiquinone oxidoreductase (complex I, CI) and ubiquinol-cytochrome c oxidoreductase (cytochrome b-c1 complex, complex III, CIII), resulting in different assemblies (supercomplex SCI(1)III(2)IV(1) and megacomplex MCI(2)III(2)IV(2)).

It localises to the mitochondrion inner membrane. The protein operates within energy metabolism; oxidative phosphorylation. Component of the cytochrome c oxidase, the last enzyme in the mitochondrial electron transport chain which drives oxidative phosphorylation. The respiratory chain contains 3 multisubunit complexes succinate dehydrogenase (complex II, CII), ubiquinol-cytochrome c oxidoreductase (cytochrome b-c1 complex, complex III, CIII) and cytochrome c oxidase (complex IV, CIV), that cooperate to transfer electrons derived from NADH and succinate to molecular oxygen, creating an electrochemical gradient over the inner membrane that drives transmembrane transport and the ATP synthase. Cytochrome c oxidase is the component of the respiratory chain that catalyzes the reduction of oxygen to water. Electrons originating from reduced cytochrome c in the intermembrane space (IMS) are transferred via the dinuclear copper A center (CU(A)) of subunit 2 and heme A of subunit 1 to the active site in subunit 1, a binuclear center (BNC) formed by heme A3 and copper B (CU(B)). The BNC reduces molecular oxygen to 2 water molecules using 4 electrons from cytochrome c in the IMS and 4 protons from the mitochondrial matrix. The sequence is that of Cytochrome c oxidase subunit 8C, mitochondrial (Cox8c) from Rattus norvegicus (Rat).